Here is a 278-residue protein sequence, read N- to C-terminus: Tryptophan synthase alpha chain (278 aa).

Active-site proton acceptor residues include Glu-50 and Asp-61.

The protein belongs to the TrpA family. As to quaternary structure, tetramer of two alpha and two beta chains.

The catalysed reaction is (1S,2R)-1-C-(indol-3-yl)glycerol 3-phosphate + L-serine = D-glyceraldehyde 3-phosphate + L-tryptophan + H2O. The protein operates within amino-acid biosynthesis; L-tryptophan biosynthesis; L-tryptophan from chorismate: step 5/5. Functionally, the alpha subunit is responsible for the aldol cleavage of indoleglycerol phosphate to indole and glyceraldehyde 3-phosphate. The sequence is that of Tryptophan synthase alpha chain from Nitrobacter hamburgensis (strain DSM 10229 / NCIMB 13809 / X14).